Reading from the N-terminus, the 286-residue chain is 2-dehydro-3-deoxyphosphooctonate aldolase (286 aa).

The protein belongs to the KdsA family.

The protein localises to the cytoplasm. It carries out the reaction D-arabinose 5-phosphate + phosphoenolpyruvate + H2O = 3-deoxy-alpha-D-manno-2-octulosonate-8-phosphate + phosphate. Its pathway is carbohydrate biosynthesis; 3-deoxy-D-manno-octulosonate biosynthesis; 3-deoxy-D-manno-octulosonate from D-ribulose 5-phosphate: step 2/3. It participates in bacterial outer membrane biogenesis; lipopolysaccharide biosynthesis. This is 2-dehydro-3-deoxyphosphooctonate aldolase from Haemophilus ducreyi (strain 35000HP / ATCC 700724).